A 374-amino-acid polypeptide reads, in one-letter code: tRNA-specific 2-thiouridylase MnmA (374 aa).

Residues 12-19 (GMSGGVDS) and methionine 38 each bind ATP. The tract at residues 98-100 (NPD) is interaction with target base in tRNA. The active-site Nucleophile is cysteine 103. Cysteine 103 and cysteine 202 are disulfide-bonded. An ATP-binding site is contributed by glycine 128. The segment at 152–154 (KDQ) is interaction with tRNA. The Cysteine persulfide intermediate role is filled by cysteine 202. Positions 316 to 317 (RY) are interaction with tRNA.

Belongs to the MnmA/TRMU family.

It is found in the cytoplasm. It catalyses the reaction S-sulfanyl-L-cysteinyl-[protein] + uridine(34) in tRNA + AH2 + ATP = 2-thiouridine(34) in tRNA + L-cysteinyl-[protein] + A + AMP + diphosphate + H(+). Catalyzes the 2-thiolation of uridine at the wobble position (U34) of tRNA, leading to the formation of s(2)U34. This Vibrio vulnificus (strain CMCP6) protein is tRNA-specific 2-thiouridylase MnmA.